The sequence spans 197 residues: Probable molybdenum cofactor guanylyltransferase (197 aa).

GTP contacts are provided by residues 6-8 (LAG), K18, D65, and D97. D97 provides a ligand contact to Mg(2+).

This sequence belongs to the MobA family. Mg(2+) serves as cofactor.

Its subcellular location is the cytoplasm. The catalysed reaction is Mo-molybdopterin + GTP + H(+) = Mo-molybdopterin guanine dinucleotide + diphosphate. Its function is as follows. Transfers a GMP moiety from GTP to Mo-molybdopterin (Mo-MPT) cofactor (Moco or molybdenum cofactor) to form Mo-molybdopterin guanine dinucleotide (Mo-MGD) cofactor. In Staphylococcus carnosus (strain TM300), this protein is Probable molybdenum cofactor guanylyltransferase.